The chain runs to 76 residues: Endothelin-1 (76 aa).

The endothelin-like stretch occupies residues 30-44 (CQCASQKDKKCWNFC).

It belongs to the endothelin/sarafotoxin family.

Its subcellular location is the secreted. Endothelins are endothelium-derived vasoconstrictor peptides. Probable ligand for G-protein coupled receptors EDNRA and EDNRB which activates PTK2B, BCAR1, BCAR3 and, GTPases RAP1 and RHOA cascade in glomerular mesangial cells. Also binds the DEAR/FBXW7-AS1 receptor. Promotes mesenteric arterial wall remodeling via activation of ROCK signaling and subsequent colocalization of NFATC3 with F-actin filaments. NFATC3 then translocates to the nucleus where it subsequently promotes the transcription of the smooth muscle hypertrophy and differentiation marker ACTA2. The sequence is that of Endothelin-1 (EDN1) from Macaca fascicularis (Crab-eating macaque).